The primary structure comprises 498 residues: MASQGTKRSYEQMETDGERQNATEIRASVGKMIDGIGRFYIQMCTELKLSDYEGRLIQNSLTIERMVLSAFDERRNKYLEEHPSAGKDPKKTGGPIYKRVDGKWMRELVLYDKEEIRRIWRQANNGDDATAGLTHMMIWHSNLNDTTYQRTRALVRTGMDPRMCSLMQGSTLPRRSGAAGAAVKGVGTMVLELIRIIKRGINDRNFWRGENGRKTRIAYERMCNILKGKFQTAAQRAMMDQVRESRNPGNAEIEDLIFLARSALILRGSVAHKSCLPACVYGPAVASGYAFEKEGYSLVGIDPFKLLQTSQVYSLIRPNENPAHKSQLVWMACNSAAFEDLRVSSFIRGTKVIPRGKLSTRGVQIASNENMDTMGSSTLELRSRYWAIRTRSGGNTNQQRASAGQISIQPTFSVQRNLPFDKTTIMAAFTGNAEGRTSDMRAEIIRMMESARPEEVSFQGRGVFELSDERAANPIVPSFDMSNEGSYFFGDNAEEYDN.

A Unconventional nuclear localization signal motif is present at residues 1–18 (MASQGTKRSYEQMETDGE). The segment at 1–21 (MASQGTKRSYEQMETDGERQN) is disordered. Residues 8 to 21 (RSYEQMETDGERQN) show a composition bias toward basic and acidic residues. The short motif at 198 to 216 (KRGINDRNFWRGENGRKTR) is the Bipartite nuclear localization signal element.

Belongs to the influenza viruses nucleoprotein family. As to quaternary structure, homomultimerizes to form the nucleocapsid. May bind host exportin-1/XPO1. Binds to viral genomic RNA. Protein-RNA contacts are mediated by a combination of electrostatic interactions between positively charged residues and the phosphate backbone and planar interactions between aromatic side chains and bases. In terms of processing, late in virus-infected cells, may be cleaved from a 56-kDa protein to a 53-kDa protein by a cellular caspase. This cleavage might be a marker for the onset of apoptosis in infected cells or have a specific function in virus host interaction.

The protein localises to the virion. Its subcellular location is the host nucleus. Encapsidates the negative strand viral RNA, protecting it from nucleases. The encapsidated genomic RNA is termed the ribonucleoprotein (RNP) and serves as template for transcription and replication. The RNP needs to be localized in the host nucleus to start an infectious cycle, but is too large to diffuse through the nuclear pore complex. NP comprises at least 2 nuclear localization signals that are responsible for the active RNP import into the nucleus through cellular importin alpha/beta pathway. Later in the infection, nclear export of RNPs are mediated through viral proteins NEP interacting with M1 which binds nucleoproteins. It is possible that nucleoprotein binds directly host exportin-1/XPO1 and plays an active role in RNPs nuclear export. M1 interaction with RNP seems to hide nucleoprotein's nuclear localization signals. Soon after a virion infects a new cell, M1 dissociates from the RNP under acidification of the virion driven by M2 protein. Dissociation of M1 from RNP unmasks nucleoprotein's nuclear localization signals, targeting the RNP to the nucleus. In Aves (Human), this protein is Nucleoprotein.